Here is a 255-residue protein sequence, read N- to C-terminus: MEKLTIAQIKKMLTEEISSEQLAELKLDERKGVQLAIKSYEKRLKKIENEKLEFQNRLKIERDLWDKGIEYIAGVDEVGRGPLAGPVVTAAVILPHDFDVFEVNDSKQLSEKKREELYKKILEKAVAVSVGLSDNNLIDEVNIYEATRLAMKQAIESLNITPQKIIVDAMTIDTKIPQLRLIKGDAKSASVAAASIVAKVTRDHLMQFYARIYPGYGFEKNDGYGTKQHLEGLENKGVTPIHRQSFEPVKKILLK.

The region spanning 70–255 is the RNase H type-2 domain; sequence EYIAGVDEVG…FEPVKKILLK (186 aa). A divalent metal cation contacts are provided by Asp-76, Glu-77, and Asp-168.

Belongs to the RNase HII family. Requires Mn(2+) as cofactor. Mg(2+) is required as a cofactor.

Its subcellular location is the cytoplasm. The catalysed reaction is Endonucleolytic cleavage to 5'-phosphomonoester.. Its function is as follows. Endonuclease that specifically degrades the RNA of RNA-DNA hybrids. The polypeptide is Ribonuclease HII (Ligilactobacillus salivarius (strain UCC118) (Lactobacillus salivarius)).